A 120-amino-acid chain; its full sequence is Large ribosomal subunit protein eL18 (120 aa).

Belongs to the eukaryotic ribosomal protein eL18 family.

This Methanococcus maripaludis (strain DSM 14266 / JCM 13030 / NBRC 101832 / S2 / LL) protein is Large ribosomal subunit protein eL18.